Consider the following 103-residue polypeptide: Large ribosomal subunit protein bL21 (103 aa).

Belongs to the bacterial ribosomal protein bL21 family. In terms of assembly, part of the 50S ribosomal subunit. Contacts protein L20.

Its function is as follows. This protein binds to 23S rRNA in the presence of protein L20. The protein is Large ribosomal subunit protein bL21 of Caldicellulosiruptor saccharolyticus (strain ATCC 43494 / DSM 8903 / Tp8T 6331).